The sequence spans 354 residues: Putative cinnamyl alcohol dehydrogenase 4 (354 aa).

Positions 47, 69, 70, 100, 103, 106, 114, and 163 each coordinate Zn(2+). Residues Thr167, 188-193, 211-216, Thr251, and 297-299 each bind NADP(+); these read GLGGLG, STSESK, and SVT.

Belongs to the zinc-containing alcohol dehydrogenase family. Homodimer. Zn(2+) is required as a cofactor.

It catalyses the reaction (E)-cinnamyl alcohol + NADP(+) = (E)-cinnamaldehyde + NADPH + H(+). The enzyme catalyses (E)-coniferol + NADP(+) = (E)-coniferaldehyde + NADPH + H(+). It carries out the reaction (E)-sinapyl alcohol + NADP(+) = (E)-sinapaldehyde + NADPH + H(+). The catalysed reaction is (E)-4-coumaroyl alcohol + NADP(+) = (E)-4-coumaraldehyde + NADPH + H(+). It catalyses the reaction (E)-caffeyl alcohol + NADP(+) = (E)-caffeyl aldehyde + NADPH + H(+). It functions in the pathway aromatic compound metabolism; phenylpropanoid biosynthesis. Functionally, involved in lignin biosynthesis. Catalyzes the final step specific for the production of lignin monomers. Catalyzes the NADPH-dependent reduction of coniferaldehyde, 5-hydroxyconiferaldehyde, sinapaldehyde, 4-coumaraldehyde and caffeyl aldehyde to their respective alcohols. The protein is Putative cinnamyl alcohol dehydrogenase 4 of Oryza sativa subsp. japonica (Rice).